The chain runs to 155 residues: Small ribosomal subunit protein uS7c (155 aa).

The protein belongs to the universal ribosomal protein uS7 family. Part of the 30S ribosomal subunit.

It localises to the plastid. The protein localises to the chloroplast. In terms of biological role, one of the primary rRNA binding proteins, it binds directly to 16S rRNA where it nucleates assembly of the head domain of the 30S subunit. This is Small ribosomal subunit protein uS7c (rps7) from Euonymus alatus (Burning bush).